Reading from the N-terminus, the 161-residue chain is Nucleotide-binding protein swp_1151 (161 aa).

The protein belongs to the YajQ family.

In terms of biological role, nucleotide-binding protein. The polypeptide is Nucleotide-binding protein swp_1151 (Shewanella piezotolerans (strain WP3 / JCM 13877)).